The following is a 1424-amino-acid chain: S-layer protein A (1424 aa).

Residues 1–24 (MNKLVGLLVSSLFLASILIGIAPA) form the signal peptide. N-linked (GlcNAc...) asparagine glycosylation is found at N60, N70, N276, N295, N342, N358, N377, N468, N517, N545, N559, N581, N633, N714, N875, N914, N955, N989, N1018, N1042, N1093, N1134, N1197, N1217, N1252, N1276, N1304, and N1419.

Belongs to the Sulfolobales SlaA family. The mushroom-shaped unit cells of the Sulfolobales' S-layers may consist of three SlaB subunits and six SlaA subunits. In terms of processing, glycosylated. C-terminal glycosylation sites are modified with a heterogeneous family of glycans, with the largest having a composition Glc(1)Man(2)GlcNAc(2) plus 6-sulfoquinovose (QuiS).

It is found in the secreted. It localises to the cell wall. The protein localises to the S-layer. Functionally, S-layer large protein. May form the highly ordered outer sheath. This chain is S-layer protein A, found in Sulfolobus acidocaldarius (strain ATCC 33909 / DSM 639 / JCM 8929 / NBRC 15157 / NCIMB 11770).